A 606-amino-acid polypeptide reads, in one-letter code: Zinc metalloproteinase-disintegrin-like HF3 (606 aa).

An N-terminal signal peptide occupies residues 1–20; the sequence is MIQVLLVTICLAAFPYQGSS. Residues 21–190 constitute a propeptide that is removed on maturation; the sequence is IILESGNVND…KKASQLVVTA (170 aa). Residues 199–395 form the Peptidase M12B domain; that stretch reads KYIELVILAD…YKPQCILNEP (197 aa). Glu202 is a Ca(2+) binding site. Asn259 carries N-linked (GlcNAc...) asparagine glycosylation. Asp286 is a Ca(2+) binding site. 3 disulfides stabilise this stretch: Cys310–Cys390, Cys350–Cys374, and Cys352–Cys357. N-linked (GlcNAc...) asparagine glycosylation is present at Asn313. His335 provides a ligand contact to Zn(2+). The active site involves Glu336. Residues His339 and His345 each coordinate Zn(2+). N-linked (GlcNAc...) asparagine glycosylation occurs at Asn373. Ca(2+) is bound by residues Cys390, Asn393, Val405, Asn408, Leu410, Glu412, Glu415, and Asp418. The Disintegrin domain occupies 403–489; it reads PPVCGNELLE…DCPTDDFKRN (87 aa). 14 disulfide bridges follow: Cys406–Cys435, Cys417–Cys430, Cys419–Cys425, Cys429–Cys452, Cys443–Cys449, Cys448–Cys474, Cys461–Cys481, Cys468–Cys500, Cys493–Cys505, Cys512–Cys562, Cys527–Cys569, Cys540–Cys550, Cys557–Cys594, and Cys588–Cys599. The short motif at 467-469 is the D/ECD-tripeptide element; the sequence is ECD. Ca(2+) contacts are provided by Asp469, Glu472, and Asp484. Asn519 carries N-linked (GlcNAc...) asparagine glycosylation. An N-linked (GlcNAc...) asparagine glycan is attached at Asn584.

Belongs to the venom metalloproteinase (M12B) family. P-III subfamily. P-IIIa sub-subfamily. As to quaternary structure, monomer. The cofactor is Zn(2+). Expressed by the venom gland.

The protein resides in the secreted. In terms of biological role, the metalloproteinase-disintegrin-like HF3 is a potent hemorrhagic toxin that activates macrophages for phagocytosis through integrin alpha-M/beta-2 (ITGAM/ITGB2). It inhibits collagen-induced platelet aggregation. This protein shows cleavage specificity for substrate for leucine at P1' position, followed by hydrophobic residues in P2'. The polypeptide is Zinc metalloproteinase-disintegrin-like HF3 (Bothrops jararaca (Jararaca)).